A 349-amino-acid polypeptide reads, in one-letter code: Quinolinate synthase (349 aa).

Iminosuccinate is bound by residues His-52 and Ser-69. Cys-114 lines the [4Fe-4S] cluster pocket. Iminosuccinate-binding positions include 140 to 142 and Ser-157; that span reads YFN. Residue Cys-201 participates in [4Fe-4S] cluster binding. Iminosuccinate contacts are provided by residues 227–229 and Thr-255; that span reads HPE. Cys-300 contacts [4Fe-4S] cluster.

It belongs to the quinolinate synthase family. Type 2 subfamily. Requires [4Fe-4S] cluster as cofactor.

The protein resides in the cytoplasm. It catalyses the reaction iminosuccinate + dihydroxyacetone phosphate = quinolinate + phosphate + 2 H2O + H(+). It functions in the pathway cofactor biosynthesis; NAD(+) biosynthesis; quinolinate from iminoaspartate: step 1/1. In terms of biological role, catalyzes the condensation of iminoaspartate with dihydroxyacetone phosphate to form quinolinate. This is Quinolinate synthase from Mycolicibacterium paratuberculosis (strain ATCC BAA-968 / K-10) (Mycobacterium paratuberculosis).